We begin with the raw amino-acid sequence, 58 residues long: MSEIKVGENETLESALRRFKKKCARAGVLSEVRKREHYEKPSVKKKKKSEAARKRKFK.

Residues 35–58 (REHYEKPSVKKKKKSEAARKRKFK) are disordered. Residues 43 to 58 (VKKKKKSEAARKRKFK) are compositionally biased toward basic residues.

This sequence belongs to the bacterial ribosomal protein bS21 family.

This Clostridium botulinum (strain Alaska E43 / Type E3) protein is Small ribosomal subunit protein bS21.